The chain runs to 320 residues: Cytochrome f (320 aa).

An N-terminal signal peptide occupies residues 1–35 (MQTRNTFSWIREEITRSISVSLMIYIITWASISSA). Heme-binding residues include tyrosine 36, cysteine 56, cysteine 59, and histidine 60. A helical membrane pass occupies residues 286 to 306 (VQGLLFFLGSVVLAQIFLVLK).

Belongs to the cytochrome f family. In terms of assembly, the 4 large subunits of the cytochrome b6-f complex are cytochrome b6, subunit IV (17 kDa polypeptide, petD), cytochrome f and the Rieske protein, while the 4 small subunits are PetG, PetL, PetM and PetN. The complex functions as a dimer. It depends on heme as a cofactor.

It localises to the plastid. Its subcellular location is the chloroplast thylakoid membrane. Component of the cytochrome b6-f complex, which mediates electron transfer between photosystem II (PSII) and photosystem I (PSI), cyclic electron flow around PSI, and state transitions. This is Cytochrome f from Nasturtium officinale (Watercress).